We begin with the raw amino-acid sequence, 1133 residues long: Sterol regulatory element-binding protein 2 (1133 aa).

Residues 1–50 (MDENSELGGLETMETLTELGDELTLGDIDEMLQFVSNQVGEFSDLFSEQL) form a transcriptional activation (acidic) region. Residues 1–473 (MDENSELGGL…VALGMVDRSR (473 aa)) lie on the Cytoplasmic side of the membrane. Over residues 56 to 65 (GGGGGSGSGG) the composition is skewed to gly residues. The disordered stretch occupies residues 56 to 136 (GGGGGSGSGG…PQPQPQPPAQ (81 aa)). Low complexity predominate over residues 92 to 109 (PLSTFSPSSTSPQAPALQ). A compositionally biased stretch (pro residues) spans 114–134 (PTPPRATPVLQPRPQPQPQPP). The interaction with LMNA stretch occupies residues 229-483 (QQVPVLVQPQ…ILLCVLTFLG (255 aa)). The bHLH domain occupies 322 to 372 (ERRTTHNIIEKRYRSSINDKIIELKDLVMGTDAKMHKSGVLRKAIDYIKYL). The tract at residues 372-393 (LQQVNHKLRQENMVLKLANQKN) is leucine-zipper. Lys-456 is covalently cross-linked (Glycyl lysine isopeptide (Lys-Gly) (interchain with G-Cter in SUMO2)). Residues 474-494 (ILLCVLTFLGLSFNPLTSLLQ) form a helical membrane-spanning segment. Over 495–525 (WGGAHNPDQHPYSGSGRNVLSLESGSGGWFD) the chain is Lumenal. A helical transmembrane segment spans residues 526–546 (WMMPTLLLWLLNGVIVLSVFV). Over 547–1133 (KLLVHGEPVI…LGGGTAIAAS (587 aa)) the chain is Cytoplasmic. Phosphoserine is present on Ser-1090.

Belongs to the SREBP family. As to quaternary structure, homodimer; efficient DNA binding of the soluble transcription factor fragment requires dimerization with another bHLH protein. Interacts with LMNA. In terms of assembly, forms a tight complex with SCAP, the SCAP-SREBP complex, in the endoplasmic reticulum membrane and the Golgi apparatus. Interacts with PAQR3; the interaction anchors the SCAP-SREBP complex to the Golgi apparatus in low cholesterol conditions. Interacts (via C-terminal domain) with RNF139. In terms of processing, processed in the Golgi apparatus, releasing the protein from the membrane. At low cholesterol the SCAP-SREBP complex is recruited into COPII vesicles for export from the endoplasmic reticulum. In the Golgi, complex SREBPs are cleaved sequentially by site-1 (MBTPS1, S1P) and site-2 (MBTPS2, S2P) proteases. The first cleavage by site-1 protease occurs within the luminal loop, the second cleavage by site-2 protease occurs within the first transmembrane domain, releasing the transcription factor from the Golgi membrane. Apoptosis triggers cleavage by the cysteine proteases caspase-3 and caspase-7. Cleavage and activation is induced by mediated cholesterol efflux. Phosphorylated by AMPK, leading to suppress protein processing and nuclear translocation, and repress target gene expression. Post-translationally, SCAP-free SREBF2 is ubiquitinated by the BCR(ARMC5) complex, leading to its degradation. In terms of processing, ubiquitinated; the nuclear form has a rapid turnover and is rapidly ubiquitinated and degraded by the proteasome in the nucleus.

It localises to the endoplasmic reticulum membrane. Its subcellular location is the golgi apparatus membrane. The protein resides in the cytoplasmic vesicle. The protein localises to the COPII-coated vesicle membrane. It is found in the nucleus. With respect to regulation, activation by cleavage is down-regulated upon activation of SIRT3-dependent PRKAA1/AMPK-alpha signaling cascade which leads to inhibition of ATP-consuming lipogenesis to restore cellular energy balance. In terms of biological role, precursor of the transcription factor form (Processed sterol regulatory element-binding protein 2), which is embedded in the endoplasmic reticulum membrane. Low sterol concentrations promote processing of this form, releasing the transcription factor form that translocates into the nucleus and activates transcription of genes involved in cholesterol biosynthesis. Its function is as follows. Key transcription factor that regulates expression of genes involved in cholesterol biosynthesis. Binds to the sterol regulatory element 1 (SRE-1) (5'-ATCACCCCAC-3'). Has dual sequence specificity binding to both an E-box motif (5'-ATCACGTGA-3') and to SRE-1 (5'-ATCACCCCAC-3'). Regulates transcription of genes related to cholesterol synthesis pathway. Regulates hepatic lipogenesis. This chain is Sterol regulatory element-binding protein 2, found in Rattus norvegicus (Rat).